We begin with the raw amino-acid sequence, 512 residues long: Bifunctional purine biosynthesis protein PurH (512 aa).

Residues Met1–Val146 form the MGS-like domain.

This sequence belongs to the PurH family.

The catalysed reaction is (6R)-10-formyltetrahydrofolate + 5-amino-1-(5-phospho-beta-D-ribosyl)imidazole-4-carboxamide = 5-formamido-1-(5-phospho-D-ribosyl)imidazole-4-carboxamide + (6S)-5,6,7,8-tetrahydrofolate. It carries out the reaction IMP + H2O = 5-formamido-1-(5-phospho-D-ribosyl)imidazole-4-carboxamide. Its pathway is purine metabolism; IMP biosynthesis via de novo pathway; 5-formamido-1-(5-phospho-D-ribosyl)imidazole-4-carboxamide from 5-amino-1-(5-phospho-D-ribosyl)imidazole-4-carboxamide (10-formyl THF route): step 1/1. It participates in purine metabolism; IMP biosynthesis via de novo pathway; IMP from 5-formamido-1-(5-phospho-D-ribosyl)imidazole-4-carboxamide: step 1/1. This Bacillus subtilis (strain 168) protein is Bifunctional purine biosynthesis protein PurH.